A 303-amino-acid polypeptide reads, in one-letter code: uncharacterized protein (303 aa).

An HTH araC/xylS-type domain is found at 183 to 281; sequence KDILFYLNNN…GCSPSDYRRQ (99 aa). 2 DNA-binding regions (H-T-H motif) span residues 200-221 and 248-271; these read EQLSKKFRASVSYICHEFTKEY and QAEISWRVGYENVDHFAKLFLRHV.

This is an uncharacterized protein from Escherichia coli (strain K12).